The chain runs to 205 residues: GTP cyclohydrolase-2 (205 aa).

A GTP-binding site is contributed by 49 to 53; sequence RLHSE. Cys-54, Cys-65, and Cys-67 together coordinate Zn(2+). GTP-binding positions include Gln-70, 92–94, and Thr-114; that span reads EGR. Residue Asp-126 is the Proton acceptor of the active site. Catalysis depends on Arg-128, which acts as the Nucleophile. GTP is bound by residues Thr-149 and Lys-154.

It belongs to the GTP cyclohydrolase II family. Zn(2+) is required as a cofactor.

The enzyme catalyses GTP + 4 H2O = 2,5-diamino-6-hydroxy-4-(5-phosphoribosylamino)-pyrimidine + formate + 2 phosphate + 3 H(+). Its pathway is cofactor biosynthesis; riboflavin biosynthesis; 5-amino-6-(D-ribitylamino)uracil from GTP: step 1/4. Functionally, catalyzes the conversion of GTP to 2,5-diamino-6-ribosylamino-4(3H)-pyrimidinone 5'-phosphate (DARP), formate and pyrophosphate. In Pseudomonas putida (strain GB-1), this protein is GTP cyclohydrolase-2.